The following is a 701-amino-acid chain: MEKRGQKRRQPTAHLSCELCRERKVKCDKLDPCTNCASAGVVCIPVRRPRLPRGAHVQRMRRISPEDPEASIQVDVPSSAGAGAGIAVVDDLKERIRRLESLVDSMRSPTSQISNLDQQSRDIIELTPNELDDDSSSTHNQATIHLGDGSLRVLGLSGPSGLDVGWTSIIKDKDISIQLCQVYLLNVDPVIKILHRPSVERWMLQGERYLGFSERHSAVDALGAAICYAAATSLTETQSWARFHATKSSIVSRARRACEAALEKSNLLVSPEVTTLQAFVLYLVARRSEDPSRAVWTLMAFAVRIAKALDLPGGADETFFSQQMRKRLWLTICLLDFQTSLSRPSEPLISVAEATSSFAPPKHINDSDFGPKSSHDISDREGLTDTTFSMVSYHVQAAGRLLNFESSSTDKEILQQHVQQFEQKTLRLLFYCDPESTPYAWFTWHRIQCFVTGARLSAIRPLRHQHRGSTGHLMPSLDTNGSASTLSLALNILEKVQLVHTDPRGEGFRWFVTVPWQPLAVAISECYVCQDKTLIQRALPIVEAAFQQHKAAVSGTSKAISTTLERLMCHVREKLSPTLCTSISLTASPAFEIANIPSTLSVPHTPPSRSSITSNGDLLSNWPWPAPDLPHNGPDIASATEAAPISTSLQKLDPLLLSLDSQLVIAGQEPLMENDQSWAAWEEVIAGLHDGETTRPNMFLS.

Positions 17–43 form a DNA-binding region, zn(2)-C6 fungal-type; that stretch reads CELCRERKVKCDKLDPCTNCASAGVVC.

It localises to the nucleus. Transcription factor that specifically regulates the neosartoricin B biosynthesis gene cluster. In Arthroderma gypseum (strain ATCC MYA-4604 / CBS 118893) (Microsporum gypseum), this protein is C6 finger domain transcription factor nscR.